The sequence spans 218 residues: Insulin-induced gene 2 protein (218 aa).

Over 1-21 (MGDRENVSYGSRPILAQKMNL) the chain is Cytoplasmic. A helical membrane pass occupies residues 22-44 (LLRGFLLFLIGVFLALVLNLLQV). At 45-63 (QRNVTLFPPDVLSSLFSSA) the chain is on the lumenal side. The chain crosses the membrane as a helical span at residues 64–81 (WWVPLCCGTAAAAIGLLY). Over 82 to 96 (PCIDRHLGEPHKFKR) the chain is Cytoplasmic. Residues 97–119 (EWSSVMRCVAVFVGINHASAKVD) traverse the membrane as a helical segment. At 120–122 (FAN) the chain is on the lumenal side. The chain crosses the membrane as a helical span at residues 123–141 (NMQLSLTLAALSIGLWWTF). The Cytoplasmic segment spans residues 142-146 (DRSRS). Residues 147-168 (GLGLGIGISFFATLVSQLLVYN) traverse the membrane as a helical segment. Residues 169–182 (GVYEYTAPDFLYVR) are Lumenal-facing. The helical transmembrane segment at 183–200 (SWLPCIFFAGGITMGNIG) threads the bilayer. Residues 201-218 (RQLEMYERKALVEKSHRD) are Cytoplasmic-facing. The KxHxx motif lies at 212–218 (VEKSHRD).

The protein belongs to the INSIG family. As to quaternary structure, interacts with scap; interaction is direct and only takes place in the presence of sterols; it prevents interaction between scap and the coat protein complex II (COPII). Associates with the SCAP-SREBP complex; association is mediated via its interaction with scap and only takes place in the presence of sterols.

Its subcellular location is the endoplasmic reticulum membrane. Functionally, oxysterol-binding protein that mediates feedback control of cholesterol synthesis by controlling both endoplasmic reticulum to Golgi transport of scap and degradation of hmgcr. Acts as a negative regulator of cholesterol biosynthesis by mediating the retention of the SCAP-SREBP complex in the endoplasmic reticulum, thereby blocking the processing of sterol regulatory element-binding proteins (SREBPs). Binds oxysterol, including 22-hydroxycholesterol, 24-hydroxycholesterol, 25-hydroxycholesterol and 27-hydroxycholesterol, regulating interaction with scap and retention of the SCAP-SREBP complex in the endoplasmic reticulum. In presence of oxysterol, interacts with scap, retaining the SCAP-SREBP complex in the endoplasmic reticulum, thereby preventing scap from escorting SREBPs to the Golgi. Sterol deprivation reduce oxysterol-binding, disrupting the interaction between insig2 and scap, thereby promoting Golgi transport of the SCAP-SREBP complex, followed by processing and nuclear translocation of SREBPs. Also regulates cholesterol synthesis by regulating degradation of hmgcr. The polypeptide is Insulin-induced gene 2 protein (Xenopus laevis (African clawed frog)).